A 338-amino-acid chain; its full sequence is RNA 3'-terminal phosphate cyclase (338 aa).

Residues glutamine 103 and 283–287 (YLADQ) contribute to the ATP site. Histidine 308 (tele-AMP-histidine intermediate) is an active-site residue.

Belongs to the RNA 3'-terminal cyclase family. Type 1 subfamily.

It is found in the cytoplasm. The enzyme catalyses a 3'-end 3'-phospho-ribonucleotide-RNA + ATP = a 3'-end 2',3'-cyclophospho-ribonucleotide-RNA + AMP + diphosphate. Catalyzes the conversion of 3'-phosphate to a 2',3'-cyclic phosphodiester at the end of RNA. The mechanism of action of the enzyme occurs in 3 steps: (A) adenylation of the enzyme by ATP; (B) transfer of adenylate to an RNA-N3'P to produce RNA-N3'PP5'A; (C) and attack of the adjacent 2'-hydroxyl on the 3'-phosphorus in the diester linkage to produce the cyclic end product. The biological role of this enzyme is unknown but it is likely to function in some aspects of cellular RNA processing. This Shigella sonnei (strain Ss046) protein is RNA 3'-terminal phosphate cyclase.